Reading from the N-terminus, the 339-residue chain is Senescence-specific cysteine protease SAG39 (339 aa).

The N-terminal stretch at 1 to 23 is a signal peptide; that stretch reads MAMAKALLFAILGCLCLCSAVLA. 3 disulfide bridges follow: C144–C187, C178–C220, and C276–C328. The active site involves C147. Catalysis depends on residues H282 and N303.

It belongs to the peptidase C1 family.

It localises to the vacuole. Functionally, cysteine protease that may have a developmental senescence specific cell death function during apoptosis, heavy metal detoxification, and hypersensitive response. This chain is Senescence-specific cysteine protease SAG39, found in Oryza sativa subsp. indica (Rice).